The following is a 306-amino-acid chain: uncharacterized protein (306 aa).

Tyr-51 (proton donor) is an active-site residue. 197-207 is an NADP(+) binding site; the sequence is GPVAKGLLTEK.

The protein belongs to the aldo/keto reductase family. Aldo/keto reductase 2 subfamily.

This is an uncharacterized protein from Bacillus subtilis (strain 168).